The following is a 415-amino-acid chain: Beta-1,4-glucuronyltransferase 1 (415 aa).

Residues 1–8 lie on the Cytoplasmic side of the membrane; that stretch reads MQMSYAIR. The chain crosses the membrane as a helical; Signal-anchor for type II membrane protein span at residues 9-36; that stretch reads CAFYQLLLAALMLVAMLQLLYLSLLSGL. The Lumenal portion of the chain corresponds to 37 to 415; that stretch reads HGQEEQDQYF…AKYPNSPRRC (379 aa). Residue N204 is glycosylated (N-linked (GlcNAc...) asparagine). Mn(2+) contacts are provided by D227 and D229. An N-linked (GlcNAc...) asparagine glycan is attached at N300.

Belongs to the glycosyltransferase 49 family. As to quaternary structure, interacts with LARGE1 and LARGE2. Mn(2+) serves as cofactor. In terms of tissue distribution, in the adult, highly expressed in heart, brain, skeletal muscle and kidney and to a lesser extent in placenta, pancreas, spleen, prostate, testis, ovary, small intestine and colon. Very weak expression in lung, liver, thymus and peripheral blood leukocytes. In fetal highly expressed in brain and kidney and to a lesser extent in lung and liver.

The protein localises to the golgi apparatus membrane. The enzyme catalyses 3-O-[beta-D-Xyl-(1-&gt;4)-Rib-ol-P-Rib-ol-P-3-beta-D-GalNAc-(1-&gt;3)-beta-D-GlcNAc-(1-&gt;4)-(O-6-P-alpha-D-Man)]-Thr-[protein] + UDP-alpha-D-glucuronate = 3-O-[beta-D-GlcA-(1-&gt;3)-beta-D-Xyl-(1-&gt;4)-Rib-ol-P-Rib-ol-P-3-beta-D-GalNAc-(1-&gt;3)-beta-D-GlcNAc-(1-&gt;4)-(O-6-P-alpha-D-Man)]-Thr-[protein] + UDP + H(+). It participates in protein modification; protein glycosylation. Its function is as follows. Beta-1,4-glucuronyltransferase involved in O-mannosylation of alpha-dystroglycan (DAG1). Transfers a glucuronic acid (GlcA) residue onto a xylose (Xyl) acceptor to produce the glucuronyl-beta-1,4-xylose-beta disaccharide primer, which is further elongated by LARGE1, during synthesis of phosphorylated O-mannosyl glycan. Phosphorylated O-mannosyl glycan is a carbohydrate structure present in alpha-dystroglycan (DAG1), which is required for binding laminin G-like domain-containing extracellular proteins with high affinity. Required for axon guidance; via its function in O-mannosylation of alpha-dystroglycan (DAG1). This chain is Beta-1,4-glucuronyltransferase 1, found in Homo sapiens (Human).